Here is a 63-residue protein sequence, read N- to C-terminus: Conotoxin p5a (63 aa).

The first 19 residues, 1 to 19 (MRCLPVFVILLLLIPSAPC), serve as a signal peptide directing secretion. The propeptide occupies 20–50 (VDAHPKTKDDMPLASFHDNAKGTLQRFWKKR). Cystine bridges form between cysteine 52–cysteine 59 and cysteine 53–cysteine 60. Leucine 62 is modified (leucine amide).

In terms of tissue distribution, expressed by the venom duct.

It localises to the secreted. In vivo, low levels of the peptide injected into male specimens of the Siamese fighting fish causes an immediate aggressive display in this fish in response to their reflection when placed in a mirrored aquarium; High levels of the peptide suppressed this behavior. No effect is observed when injected into mice. The sequence is that of Conotoxin p5a from Conus purpurascens (Purple cone).